Here is a 507-residue protein sequence, read N- to C-terminus: 2,3-bisphosphoglycerate-independent phosphoglycerate mutase (507 aa).

Mn(2+)-binding residues include D11 and S61. S61 serves as the catalytic Phosphoserine intermediate. Substrate-binding positions include H122, R150–D151, R182, R188, R257–R260, and K332. Positions 397, 401, 438, 439, and 456 each coordinate Mn(2+).

It belongs to the BPG-independent phosphoglycerate mutase family. In terms of assembly, monomer. It depends on Mn(2+) as a cofactor.

The enzyme catalyses (2R)-2-phosphoglycerate = (2R)-3-phosphoglycerate. It functions in the pathway carbohydrate degradation; glycolysis; pyruvate from D-glyceraldehyde 3-phosphate: step 3/5. Its function is as follows. Catalyzes the interconversion of 2-phosphoglycerate and 3-phosphoglycerate. The sequence is that of 2,3-bisphosphoglycerate-independent phosphoglycerate mutase from Mycoplasma genitalium (strain ATCC 33530 / DSM 19775 / NCTC 10195 / G37) (Mycoplasmoides genitalium).